The chain runs to 356 residues: Dual-specificity RNA methyltransferase RlmN (356 aa).

Glu89 serves as the catalytic Proton acceptor. The region spanning 108–341 (KHARYTICVS…CTIRESKGLD (234 aa)) is the Radical SAM core domain. A disulfide bond links Cys115 and Cys346. Cys122, Cys126, and Cys129 together coordinate [4Fe-4S] cluster. Residues 172–173 (GE), Ser204, 227–229 (SLH), and Asn303 each bind S-adenosyl-L-methionine. Cys346 acts as the S-methylcysteine intermediate in catalysis.

The protein belongs to the radical SAM superfamily. RlmN family. [4Fe-4S] cluster serves as cofactor.

The protein resides in the cytoplasm. It catalyses the reaction adenosine(2503) in 23S rRNA + 2 reduced [2Fe-2S]-[ferredoxin] + 2 S-adenosyl-L-methionine = 2-methyladenosine(2503) in 23S rRNA + 5'-deoxyadenosine + L-methionine + 2 oxidized [2Fe-2S]-[ferredoxin] + S-adenosyl-L-homocysteine. The enzyme catalyses adenosine(37) in tRNA + 2 reduced [2Fe-2S]-[ferredoxin] + 2 S-adenosyl-L-methionine = 2-methyladenosine(37) in tRNA + 5'-deoxyadenosine + L-methionine + 2 oxidized [2Fe-2S]-[ferredoxin] + S-adenosyl-L-homocysteine. Functionally, specifically methylates position 2 of adenine 2503 in 23S rRNA and position 2 of adenine 37 in tRNAs. m2A2503 modification seems to play a crucial role in the proofreading step occurring at the peptidyl transferase center and thus would serve to optimize ribosomal fidelity. The chain is Dual-specificity RNA methyltransferase RlmN from Campylobacter lari (strain RM2100 / D67 / ATCC BAA-1060).